A 475-amino-acid polypeptide reads, in one-letter code: Transmembrane protein 181 (475 aa).

Helical transmembrane passes span 16–36 (HFVLVFVVFFICFGLTIFVGI), 131–151 (EIIVAHLGYLNYTQYTVIVGF), 175–195 (LEIWFRFFFVVLTFIVTCLFA), 214–234 (SVLLPLLLLYNDPFFPLSFLV), 245–265 (LFQSMFLCALLLFWLCVYHGI), 276–296 (FYLPKFFIVGLLWLASVTLGI), 320–340 (MKVFFMVVAAVYILYLLFLIV), 356–376 (LKFLTALTFVVLVISIAILYL), and 401–421 (FLSFYGLLNFYLYTLAFVYSP). A Phosphoserine modification is found at S443.

This sequence belongs to the TMEM181 family. Interacts with cytolethal distending toxin.

It is found in the membrane. In terms of biological role, mediates action of cytolethal distending toxins (CDT), which are secreted by many pathogenic bacteria. Expression level of TMEM181 is rate-limiting for intoxication. This Homo sapiens (Human) protein is Transmembrane protein 181 (TMEM181).